A 241-amino-acid chain; its full sequence is Golgi-associated RAB2 interactor protein 6 (241 aa).

The protein belongs to the GARIN family.

This chain is Golgi-associated RAB2 interactor protein 6, found in Homo sapiens (Human).